The sequence spans 239 residues: Bradykinin-potentiating and C-type natriuretic peptides (239 aa).

Residues 1 to 23 form the signal peptide; that stretch reads MFVSRLAASGLLLLALLAVSLDG. Propeptides lie at residues 24–33 and 43–49; these read KPVQQWSHKG and LVVQQWS. A Pyrrolidone carboxylic acid modification is found at Q50. The propeptide occupies 62 to 64; sequence VVV. Pyrrolidone carboxylic acid is present on Q65. Residues 76–82 constitute a propeptide that is removed on maturation; that stretch reads LVVQQWS. Pyrrolidone carboxylic acid is present on Q83. Positions 95–97 are excised as a propeptide; that stretch reads LVV. Position 98 is a pyrrolidone carboxylic acid (Q98). Propeptides lie at residues 109–136 and 148–217; these read LLKP…AALD and GSKA…LAKK. The disordered stretch occupies residues 132 to 205; the sequence is EAALDTPPAG…HHAVGGGGGG (74 aa). The span at 161–171 shows a compositional bias: low complexity; sequence SKGASATSAAS. The segment covering 173–183 has biased composition (basic and acidic residues); sequence PMRDLRTDGKQ. C223 and C239 are joined by a disulfide.

In the N-terminal section; belongs to the bradykinin-potentiating peptide family. The protein in the central section; belongs to the bradykinin inhibitor peptide family. This sequence in the C-terminal section; belongs to the natriuretic peptide family. Expressed by the venom gland.

The protein localises to the secreted. Its function is as follows. Bradykinin-potentiating peptides both inhibit the activity of the angiotensin-converting enzyme (ACE) and enhances the action of bradykinin by inhibiting the peptidases that inactivate it. They act as indirect hypotensive agent. Functionally, inhibits angiotensin-converting enzyme (ACE) activity (IC(50)=4.25 uM), preventing the release of angiotensin and thus indirectly contributing to hypotension. In vivo, induce hypotensive response in both normotensive and hypertensive rats. Antagonizes the vasodilatory actions of bradykinin at the B2 bradykinin receptor (BDKRB2). In terms of biological role, has a vasorelaxant activity in rat aortic strips and a diuretic potency in anesthetized rats. May act by activating natriuretic receptors (NPR1 and/or NPR2). In Lachesis muta muta (Bushmaster), this protein is Bradykinin-potentiating and C-type natriuretic peptides.